Reading from the N-terminus, the 304-residue chain is Nod factor export ATP-binding protein I (304 aa).

Positions 6-236 constitute an ABC transporter domain; sequence IEFDKVKKSY…EIGCDVIEIF (231 aa). Position 38–45 (38–45) interacts with ATP; the sequence is GPNGAGKT.

Belongs to the ABC transporter superfamily. Lipooligosaccharide exporter (TC 3.A.1.102) family. The complex is composed of two ATP-binding proteins (NodI) and two transmembrane proteins (NodJ).

The protein resides in the cell inner membrane. Its function is as follows. Part of the ABC transporter complex NodIJ involved in the export of the nodulation factors (Nod factors), the bacterial signal molecules that induce symbiosis and subsequent nodulation induction. Nod factors are LCO (lipo-chitin oligosaccharide), a modified beta-1,4-linked N-acetylglucosamine oligosaccharide. This subunit is responsible for energy coupling to the transport system. The chain is Nod factor export ATP-binding protein I from Paraburkholderia xenovorans (strain LB400).